A 309-amino-acid polypeptide reads, in one-letter code: Protein FdhE (309 aa).

Belongs to the FdhE family.

The protein localises to the cytoplasm. Its function is as follows. Necessary for formate dehydrogenase activity. This is Protein FdhE from Salmonella choleraesuis (strain SC-B67).